The chain runs to 527 residues: GMP synthase [glutamine-hydrolyzing] (527 aa).

Residues 20 to 208 (SVVILDYGSQ…LFDVCGCAPT (189 aa)) form the Glutamine amidotransferase type-1 domain. Cys-97 serves as the catalytic Nucleophile. Catalysis depends on residues His-182 and Glu-184. Residues 209-402 (WTAESFVEQA…LGLPEEIVQR (194 aa)) enclose the GMPS ATP-PPase domain. Position 236-242 (236-242 (SGGVDSS)) interacts with ATP.

As to quaternary structure, homodimer.

The catalysed reaction is XMP + L-glutamine + ATP + H2O = GMP + L-glutamate + AMP + diphosphate + 2 H(+). It participates in purine metabolism; GMP biosynthesis; GMP from XMP (L-Gln route): step 1/1. Functionally, catalyzes the synthesis of GMP from XMP. The chain is GMP synthase [glutamine-hydrolyzing] from Thermomicrobium roseum (strain ATCC 27502 / DSM 5159 / P-2).